Here is a 259-residue protein sequence, read N- to C-terminus: MNWLEAFILGIIQGLTEFLPISSTGHLYLGRHLFRLDEAGLFLDTMLHIGTLLAVFIYYKKEFIYLIKNPFSKLMLLLIVGTIPAVVIGLLFKDFFEDISKTGITIGWEFLVSGFFLYMADKQKNGRKKMDDITYKDALIIGSFQAAAIFPAISRSGMTIVAALWRKLDRETAAYFSFLLSTPAIVGAIILQFVDVFQGKAESISSTSLIVGTLSAAFFGYIAVSWMIQYLKRHSLKVFAYYVWGLGILILMLQFTDVF.

Transmembrane regions (helical) follow at residues 1-21, 39-59, 71-91, 99-119, 133-153, 174-194, 208-228, and 239-259; these read MNWLEAFILGIIQGLTEFLPI, AGLFLDTMLHIGTLLAVFIYY, FSKLMLLLIVGTIPAVVIGLL, ISKTGITIGWEFLVSGFFLYM, ITYKDALIIGSFQAAAIFPAI, AYFSFLLSTPAIVGAIILQFV, SLIVGTLSAAFFGYIAVSWMI, and FAYYVWGLGILILMLQFTDVF.

Belongs to the UppP family.

The protein localises to the cell membrane. The catalysed reaction is di-trans,octa-cis-undecaprenyl diphosphate + H2O = di-trans,octa-cis-undecaprenyl phosphate + phosphate + H(+). Catalyzes the dephosphorylation of undecaprenyl diphosphate (UPP). Confers resistance to bacitracin. The chain is Undecaprenyl-diphosphatase 3 from Bacillus cereus (strain ATCC 14579 / DSM 31 / CCUG 7414 / JCM 2152 / NBRC 15305 / NCIMB 9373 / NCTC 2599 / NRRL B-3711).